The chain runs to 235 residues: Small ribosomal subunit protein uS2c (235 aa).

It belongs to the universal ribosomal protein uS2 family.

The protein localises to the plastid. It is found in the chloroplast. This chain is Small ribosomal subunit protein uS2c (rps2), found in Zygnema circumcarinatum (Green alga).